The chain runs to 442 residues: D-serine dehydratase (442 aa).

K118 bears the N6-(pyridoxal phosphate)lysine mark.

Belongs to the serine/threonine dehydratase family. DsdA subfamily. In terms of assembly, monomer. Pyridoxal 5'-phosphate is required as a cofactor.

The catalysed reaction is D-serine = pyruvate + NH4(+). This Shigella flexneri protein is D-serine dehydratase.